Consider the following 289-residue polypeptide: Iodotyrosine deiodinase 1 (289 aa).

The helical transmembrane segment at 1-21 threads the bilayer; it reads MFLLTPVLVAVVCILMVWIFK. Residues 100 to 104 and 128 to 129 each bind FMN; these read RRSVR and SG. 3,5-diiodo-L-tyrosine is bound by residues Ala-130, Glu-157, Tyr-161, and Lys-182. 3-iodo-L-tyrosine-binding residues include Ala-130, Glu-157, Tyr-161, and Lys-182. Residues 237–239 and Arg-279 contribute to the FMN site; that span reads TTT.

The protein belongs to the nitroreductase family. As to quaternary structure, homodimer. Requires FMN as cofactor. As to expression, detected in thyroid (at protein level).

The protein resides in the cell membrane. Its subcellular location is the cytoplasmic vesicle membrane. The enzyme catalyses 2 iodide + L-tyrosine + 2 NADP(+) = 3,5-diiodo-L-tyrosine + 2 NADPH + H(+). It carries out the reaction iodide + L-tyrosine + NADP(+) = 3-iodo-L-tyrosine + NADPH. It catalyses the reaction 3-iodo-L-tyrosine + iodide + NADP(+) = 3,5-diiodo-L-tyrosine + NADPH + H(+). The catalysed reaction is L-tyrosine + chloride + NADP(+) = 3-chloro-L-tyrosine + NADPH. The enzyme catalyses bromide + L-tyrosine + NADP(+) = 3-bromo-L-tyrosine + NADPH. Functionally, catalyzes the dehalogenation of halotyrosines such as 3-bromo-L-tyrosine, 3-chloro-L-tyrosine, 3-iodo-L-tyrosine and 3,5-diiodo-L-tyrosine. During thyroid hormone biosynthesis, facilitates iodide salvage by catalysing the oxidative NADPH-dependent deiodination of the halogenated by-products of thyroid hormone production, monoiodotyrosine (L-MIT) and diiodotyrosine (L-DIT). The scavanged iodide can then reenter the hormone-producing pathways. Acts more efficiently on 3-iodo-L-tyrosine than 3,5-diiodo-L-tyrosine. The polypeptide is Iodotyrosine deiodinase 1 (IYD) (Sus scrofa (Pig)).